We begin with the raw amino-acid sequence, 522 residues long: Glutamyl-tRNA(Gln) amidotransferase subunit A (522 aa).

Residues Lys-88 and Ser-163 each act as charge relay system in the active site. Ser-187 functions as the Acyl-ester intermediate in the catalytic mechanism.

The protein belongs to the amidase family. GatA subfamily. As to quaternary structure, heterotrimer of A, B and C subunits.

The catalysed reaction is L-glutamyl-tRNA(Gln) + L-glutamine + ATP + H2O = L-glutaminyl-tRNA(Gln) + L-glutamate + ADP + phosphate + H(+). Allows the formation of correctly charged Gln-tRNA(Gln) through the transamidation of misacylated Glu-tRNA(Gln) in organisms which lack glutaminyl-tRNA synthetase. The reaction takes place in the presence of glutamine and ATP through an activated gamma-phospho-Glu-tRNA(Gln). The polypeptide is Glutamyl-tRNA(Gln) amidotransferase subunit A (Paenarthrobacter aurescens (strain TC1)).